The primary structure comprises 122 residues: Small ribosomal subunit protein uS12 (122 aa).

Residues 1 to 24 are disordered; the sequence is MPTINQLIRKKRKSTGKKRTAPAL. The span at 8 to 20 shows a compositional bias: basic residues; sequence IRKKRKSTGKKRT. 3-methylthioaspartic acid is present on D89.

The protein belongs to the universal ribosomal protein uS12 family. As to quaternary structure, part of the 30S ribosomal subunit. Contacts proteins S8 and S17. May interact with IF1 in the 30S initiation complex.

Functionally, with S4 and S5 plays an important role in translational accuracy. In terms of biological role, interacts with and stabilizes bases of the 16S rRNA that are involved in tRNA selection in the A site and with the mRNA backbone. Located at the interface of the 30S and 50S subunits, it traverses the body of the 30S subunit contacting proteins on the other side and probably holding the rRNA structure together. The combined cluster of proteins S8, S12 and S17 appears to hold together the shoulder and platform of the 30S subunit. This Natranaerobius thermophilus (strain ATCC BAA-1301 / DSM 18059 / JW/NM-WN-LF) protein is Small ribosomal subunit protein uS12.